The following is a 339-amino-acid chain: Lipoate--protein ligase (339 aa).

In terms of domain architecture, BPL/LPL catalytic spans 31-221 (FLDDDILFPY…QLLQIETISQ (191 aa)). ATP-binding positions include Arg73, 78–81 (GAVY), Lys135, and Ala139. Position 135 (Lys135) interacts with (R)-lipoate.

Belongs to the LplA family.

It catalyses the reaction L-lysyl-[lipoyl-carrier protein] + (R)-lipoate + ATP = N(6)-[(R)-lipoyl]-L-lysyl-[lipoyl-carrier protein] + AMP + diphosphate + H(+). It functions in the pathway protein modification; protein lipoylation via exogenous pathway; protein N(6)-(lipoyl)lysine from lipoate: step 1/2. Its pathway is protein modification; protein lipoylation via exogenous pathway; protein N(6)-(lipoyl)lysine from lipoate: step 2/2. In terms of biological role, catalyzes specifically the lipoylation of GcvH-L (SpyM50867), likely via the ATP-dependent activation of lipoate to lipoyl-AMP and the transfer of the activated lipoyl onto the lipoyl domain of the target protein. The protein is Lipoate--protein ligase of Streptococcus pyogenes serotype M5 (strain Manfredo).